Here is a 1872-residue protein sequence, read N- to C-terminus: Histone acetyltransferase KAT6B (1872 aa).

The region spanning 1–77 (MVKLANPLYT…LASYKDPDNP (77 aa)) is the SAMD1-like winged helix (WH) domain. Disordered regions lie at residues 70-103 (SYKD…CNDL) and 168-207 (KEGP…HEKD). The 74-residue stretch at 104-177 (RNVDWNKLLK…KEGPQYRVNS (74 aa)) folds into the H15 domain. A compositionally biased stretch (low complexity) spans 189 to 202 (PSAFPSSLPPVSLL). PHD-type zinc fingers lie at residues 214-273 (IPIC…CKTC) and 270-321 (CKTC…CRPK). Ser356 is modified (phosphoserine). Residues 361–417 (EGSMSAFTGRGSPGRGQKTKVSTTPSSGHAASGKHSSSRLAVTDPTRPGATTKTTTS) are disordered. A negatively regulates HAT activity region spans residues 362–535 (GSMSAFTGRG…ECESGVEDCG (174 aa)). A compositionally biased stretch (low complexity) spans 386–395 (SSGHAASGKH). Residue Lys491 forms a Glycyl lysine isopeptide (Lys-Gly) (interchain with G-Cter in SUMO2) linkage. Positions 533 to 807 (DCGRYPSVIE…LDPESLRWTP (275 aa)) constitute an MYST-type HAT domain. Positions 536–826 (RYPSVIEFGK…EEEREAEKEA (291 aa)) are catalytic. Residues 566–591 (LYLCEFCLKYMKSKNILLRHSKKCGW) form a C2HC MYST-type zinc finger. Residues 570–826 (EFCLKYMKSK…EEEREAEKEA (257 aa)) are interaction with BRPF1. At Lys633 the chain carries N6-acetyllysine; by autocatalysis. Acetyl-CoA is bound by residues 674–678 (SCIMI) and 683–689 (QRQGFGR). Catalysis depends on Glu709, which acts as the Proton donor/acceptor. Ser713 lines the acetyl-CoA pocket. The segment covering 846-860 (SRVSSRQSSAKVQSK) has biased composition (low complexity). 4 disordered regions span residues 846 to 1018 (SRVS…NHFF), 1031 to 1252 (DAEH…FKDA), 1283 to 1358 (MSCN…DDTF), and 1388 to 1418 (DECQ…SPSV). N6-acetyllysine is present on residues Lys856, Lys860, and Lys862. At Ser866 the chain carries Phosphoserine. A compositionally biased stretch (acidic residues) spans 887–909 (SEEEEEEEEEDDEEEEEEEEEES). Residues 910–924 (IQTSPPRLTKPQSVS) are compositionally biased toward polar residues. The span at 925–944 (IKRKRPFVVKKKRGRKRRRI) shows a compositional bias: basic residues. The span at 946–959 (SSVTTETISETTEV) shows a compositional bias: low complexity. The span at 991 to 1004 (PVLRKAFPHQPGKK) shows a compositional bias: basic residues. Composition is skewed to basic and acidic residues over residues 1031 to 1047 (DAEH…EPLK) and 1094 to 1114 (EEQK…REVT). Residues 1155–1176 (EEGEEEGEEEGEREEQEEEEEV) show a composition bias toward acidic residues. Residues 1177-1207 (TTEKDLDGAKSKENPEPEISMEKEDPVHLGD) are compositionally biased toward basic and acidic residues. Acidic residues predominate over residues 1208-1217 (HEEDEDEEEE). Composition is skewed to basic and acidic residues over residues 1238–1252 (NMER…FKDA) and 1310–1320 (QTQKQDQKNSD). The segment covering 1339 to 1349 (ETAQAVQSLTQ) has biased composition (polar residues). Residues 1359–1872 (PDCAETQEAC…QSLNGSYMRR (514 aa)) form an interaction with RUNX1 and RUNX2 region. Residues 1393 to 1410 (SDHSSPVSSVHSHPGQSV) show a composition bias toward low complexity.

This sequence belongs to the MYST (SAS/MOZ) family. In terms of assembly, component of the MOZ/MORF complex composed at least of ING5, KAT6A, KAT6B, MEAF6 and one of BRPF1, BRD1/BRPF2 and BRPF3. Interacts with RUNX1 and RUNX2. Post-translationally, autoacetylation at Lys-633 is required for proper function. As to expression, ubiquitously expressed.

It is found in the nucleus. It carries out the reaction L-lysyl-[protein] + acetyl-CoA = N(6)-acetyl-L-lysyl-[protein] + CoA + H(+). Its function is as follows. Histone acetyltransferase which may be involved in both positive and negative regulation of transcription. Required for RUNX2-dependent transcriptional activation. Component of the MOZ/MORF complex which has a histone H3 acetyltransferase activity. Involved in cerebral cortex development. This is Histone acetyltransferase KAT6B (Kat6b) from Mus musculus (Mouse).